Here is a 743-residue protein sequence, read N- to C-terminus: 1,4-alpha-glucan branching enzyme GlgB (743 aa).

The active-site Nucleophile is aspartate 416. Catalysis depends on glutamate 469, which acts as the Proton donor.

This sequence belongs to the glycosyl hydrolase 13 family. GlgB subfamily. As to quaternary structure, monomer.

The enzyme catalyses Transfers a segment of a (1-&gt;4)-alpha-D-glucan chain to a primary hydroxy group in a similar glucan chain.. It participates in glycan biosynthesis; glycogen biosynthesis. In terms of biological role, catalyzes the formation of the alpha-1,6-glucosidic linkages in glycogen by scission of a 1,4-alpha-linked oligosaccharide from growing alpha-1,4-glucan chains and the subsequent attachment of the oligosaccharide to the alpha-1,6 position. The polypeptide is 1,4-alpha-glucan branching enzyme GlgB (Shewanella baltica (strain OS195)).